Consider the following 670-residue polypeptide: Protein angel homolog 1 (670 aa).

Phosphoserine is present on residues S77 and S105.

It belongs to the CCR4/nocturin family.

This Homo sapiens (Human) protein is Protein angel homolog 1 (ANGEL1).